The following is a 485-amino-acid chain: Pumilio domain-containing protein 7 (485 aa).

Positions 29 to 72 (NKTHKNKNPKPPVKLLPYRHGSNTTSSDSDSYIFNSGSGSSDAE) are disordered. Residues 49–71 (GSNTTSSDSDSYIFNSGSGSSDA) are compositionally biased toward polar residues. Pumilio repeat units lie at residues 86-124 (DVLL…AVFE), 128-163 (ESTT…ELLR), 164-200 (QMID…QLIQ), 201-236 (ELST…TFFV), 237-279 (HFLS…FRIQ), 287-324 (CIVR…TIID), 326-361 (CLLR…EMME), and 370-411 (DVES…RELP). The tract at residues 439–454 (FSSGKKIIDSVMRHGV) is RNA-binding.

RNA-binding protein that binds to the consensus sequence 5'-CUCUGUAUCUUGU-3' in mRNA 3'-UTRs and modulates mRNA expression and stability. Functions redundantly with puf-5 and puf-6 in oocyte formation and organization, early embryonic cell divisions, and repression of expression of glp-1 and other maternal mRNAs in late oogenesis. The polypeptide is Pumilio domain-containing protein 7 (Caenorhabditis elegans).